The primary structure comprises 258 residues: Phosphate import ATP-binding protein PstB (258 aa).

One can recognise an ABC transporter domain in the interval 12–253 (LEVKNLNFYY…PARKETEDYI (242 aa)). Residue 44–51 (GPSGCGKS) coordinates ATP.

Belongs to the ABC transporter superfamily. Phosphate importer (TC 3.A.1.7) family. As to quaternary structure, the complex is composed of two ATP-binding proteins (PstB), two transmembrane proteins (PstC and PstA) and a solute-binding protein (PstS).

It is found in the cell inner membrane. It carries out the reaction phosphate(out) + ATP + H2O = ADP + 2 phosphate(in) + H(+). In terms of biological role, part of the ABC transporter complex PstSACB involved in phosphate import. Responsible for energy coupling to the transport system. This Bordetella pertussis (strain Tohama I / ATCC BAA-589 / NCTC 13251) protein is Phosphate import ATP-binding protein PstB.